The primary structure comprises 454 residues: Arginine biosynthesis bifunctional protein ArgJ, mitochondrial (454 aa).

Substrate is bound by residues Thr-184, Lys-213, Thr-224, Glu-311, Asn-449, and Thr-454. Residue Thr-224 is the Nucleophile of the active site.

It belongs to the ArgJ family. Heterodimer of an alpha and a beta chain. In terms of processing, the alpha and beta chains are autoproteolytically processed from a single precursor protein within the mitochondrion.

It is found in the mitochondrion matrix. It carries out the reaction N(2)-acetyl-L-ornithine + L-glutamate = N-acetyl-L-glutamate + L-ornithine. The enzyme catalyses L-glutamate + acetyl-CoA = N-acetyl-L-glutamate + CoA + H(+). The protein operates within amino-acid biosynthesis; L-arginine biosynthesis; L-ornithine and N-acetyl-L-glutamate from L-glutamate and N(2)-acetyl-L-ornithine (cyclic): step 1/1. It participates in amino-acid biosynthesis; L-arginine biosynthesis; N(2)-acetyl-L-ornithine from L-glutamate: step 1/4. Its function is as follows. Catalyzes two activities which are involved in the cyclic version of arginine biosynthesis: the synthesis of acetylglutamate from glutamate and acetyl-CoA, and of ornithine by transacetylation between acetylornithine and glutamate. The sequence is that of Arginine biosynthesis bifunctional protein ArgJ, mitochondrial from Aspergillus clavatus (strain ATCC 1007 / CBS 513.65 / DSM 816 / NCTC 3887 / NRRL 1 / QM 1276 / 107).